The following is a 393-amino-acid chain: UDP-sulfoquinovose synthase (393 aa).

NAD(+)-binding positions include 31-35 (DNLST), 74-75 (DI), arginine 100, and asparagine 118. Residue arginine 100 coordinates substrate. Threonine 144 and tyrosine 182 together coordinate substrate. The active site involves threonine 144. The NAD(+) site is built by tyrosine 182 and lysine 186. The Proton acceptor role is filled by tyrosine 182. Residue lysine 186 is part of the active site. Residue glutamine 209 participates in substrate binding. Residue valine 212 coordinates NAD(+). Substrate contacts are provided by residues 238–241 (VVNR), 253–255 (TVY), and 326–328 (RVE).

The protein belongs to the NAD(P)-dependent epimerase/dehydratase family. It depends on NAD(+) as a cofactor.

The catalysed reaction is sulfite + UDP-alpha-D-glucose + H(+) = UDP-alpha-D-6-sulfoquinovose + H2O. Catalyzes the biosynthesis of UDP-sulfoquinovose by the transfer of sulfite to UDP-glucose. Important for the assembly of the S-layer N-glycans. The reaction probably occurs through an NAD(+)-dependent oxidation/dehydration/enolization/sulfite addition process. In vitro, in the absence of sulfite, UDP-D-glucose is converted via UDP-4-keto-D-glucose to UDP-D-glucose-5,6-ene. This Sulfolobus acidocaldarius (strain ATCC 33909 / DSM 639 / JCM 8929 / NBRC 15157 / NCIMB 11770) protein is UDP-sulfoquinovose synthase.